The primary structure comprises 236 residues: Aspartate/glutamate leucyltransferase (236 aa).

It belongs to the R-transferase family. Bpt subfamily.

Its subcellular location is the cytoplasm. The catalysed reaction is N-terminal L-glutamyl-[protein] + L-leucyl-tRNA(Leu) = N-terminal L-leucyl-L-glutamyl-[protein] + tRNA(Leu) + H(+). It carries out the reaction N-terminal L-aspartyl-[protein] + L-leucyl-tRNA(Leu) = N-terminal L-leucyl-L-aspartyl-[protein] + tRNA(Leu) + H(+). In terms of biological role, functions in the N-end rule pathway of protein degradation where it conjugates Leu from its aminoacyl-tRNA to the N-termini of proteins containing an N-terminal aspartate or glutamate. In Saccharophagus degradans (strain 2-40 / ATCC 43961 / DSM 17024), this protein is Aspartate/glutamate leucyltransferase.